The following is a 207-amino-acid chain: PITH domain-containing protein P35G2.02 (207 aa).

The 177-residue stretch at 13–189 (EHPFESGPND…PVVTIYEATP (177 aa)) folds into the PITH domain.

This sequence belongs to the PITHD1 family.

Its subcellular location is the cytoplasm. The protein localises to the nucleus. The protein is PITH domain-containing protein P35G2.02 of Schizosaccharomyces pombe (strain 972 / ATCC 24843) (Fission yeast).